Reading from the N-terminus, the 344-residue chain is Dihydroorotase (344 aa).

Positions 13 and 15 each coordinate Zn(2+). Substrate-binding positions include 15–17 (HLR) and asparagine 41. Zn(2+) contacts are provided by lysine 99, histidine 136, and histidine 174. Lysine 99 bears the N6-carboxylysine mark. Residue histidine 136 coordinates substrate. A substrate-binding site is contributed by leucine 219. Residue aspartate 247 participates in Zn(2+) binding. Residue aspartate 247 is part of the active site. Substrate contacts are provided by histidine 251 and alanine 263.

It belongs to the metallo-dependent hydrolases superfamily. DHOase family. Class II DHOase subfamily. In terms of assembly, homodimer. Zn(2+) is required as a cofactor.

It carries out the reaction (S)-dihydroorotate + H2O = N-carbamoyl-L-aspartate + H(+). The protein operates within pyrimidine metabolism; UMP biosynthesis via de novo pathway; (S)-dihydroorotate from bicarbonate: step 3/3. Its function is as follows. Catalyzes the reversible cyclization of carbamoyl aspartate to dihydroorotate. This Acinetobacter baylyi (strain ATCC 33305 / BD413 / ADP1) protein is Dihydroorotase.